Consider the following 139-residue polypeptide: Exodeoxyribonuclease 7 small subunit (139 aa).

Disordered regions lie at residues 1–26 (MAKKKRNPSAEEAGDGEQTAAELGDF) and 82–139 (DAEG…EDDE). Residues 130–139 (ADLDSAEDDE) show a composition bias toward acidic residues.

It belongs to the XseB family. Heterooligomer composed of large and small subunits.

It localises to the cytoplasm. The catalysed reaction is Exonucleolytic cleavage in either 5'- to 3'- or 3'- to 5'-direction to yield nucleoside 5'-phosphates.. In terms of biological role, bidirectionally degrades single-stranded DNA into large acid-insoluble oligonucleotides, which are then degraded further into small acid-soluble oligonucleotides. The polypeptide is Exodeoxyribonuclease 7 small subunit (Rhodopirellula baltica (strain DSM 10527 / NCIMB 13988 / SH1)).